A 194-amino-acid chain; its full sequence is Alkyl hydroperoxide reductase AhpD (194 aa).

The active-site Proton donor is cysteine 132. Residues cysteine 132 and cysteine 135 are joined by a disulfide bond. The active-site Cysteine sulfenic acid (-SOH) intermediate is the cysteine 135.

Belongs to the AhpD family.

The catalysed reaction is N(6)-[(R)-dihydrolipoyl]-L-lysyl-[lipoyl-carrier protein] + a hydroperoxide = N(6)-[(R)-lipoyl]-L-lysyl-[lipoyl-carrier protein] + an alcohol + H2O. Functionally, antioxidant protein with alkyl hydroperoxidase activity. Required for the reduction of the AhpC active site cysteine residues and for the regeneration of the AhpC enzyme activity. This chain is Alkyl hydroperoxide reductase AhpD, found in Koribacter versatilis (strain Ellin345).